The following is a 368-amino-acid chain: Ribulose bisphosphate carboxylase-like protein 1 (368 aa).

This sequence belongs to the RuBisCO large chain family. Type IV subfamily.

Unknown. Probably does not have RuBisCO activity. In Rhodopseudomonas palustris (strain ATCC BAA-98 / CGA009), this protein is Ribulose bisphosphate carboxylase-like protein 1 (rlp1).